Here is a 170-residue protein sequence, read N- to C-terminus: Metalloproteinase inhibitor 4 (170 aa).

One can recognise an NTR domain in the interval 1–105; it reads ISSEKVVPAS…SLNHHYHLNC (105 aa). Involved in metalloproteinase-binding stretches follow at residues 6–9 and 48–49; these read VVPA and SS. Cystine bridges form between Cys-107/Cys-154, Cys-112/Cys-117, and Cys-125/Cys-146.

The protein belongs to the protease inhibitor I35 (TIMP) family.

The protein localises to the secreted. Its function is as follows. Complexes with metalloproteinases (such as collagenases) and irreversibly inactivates them by binding to their catalytic zinc cofactor. This chain is Metalloproteinase inhibitor 4 (TIMP4), found in Oryctolagus cuniculus (Rabbit).